The chain runs to 113 residues: Coat protein TP1 (113 aa).

It is found in the virion. The chain is Coat protein TP1 from Thermoproteus tenax virus 1 (strain KRA1) (TTV1).